Consider the following 211-residue polypeptide: Uracil phosphoribosyltransferase (211 aa).

Lysine 30–arginine 34 lines the GTP pocket. 5-phospho-alpha-D-ribose 1-diphosphate is bound by residues arginine 79, arginine 104, and aspartate 133–threonine 141. Uracil-binding positions include isoleucine 197 and glycine 202 to alanine 204. A 5-phospho-alpha-D-ribose 1-diphosphate-binding site is contributed by aspartate 203.

The protein belongs to the UPRTase family. Mg(2+) serves as cofactor.

It catalyses the reaction UMP + diphosphate = 5-phospho-alpha-D-ribose 1-diphosphate + uracil. It participates in pyrimidine metabolism; UMP biosynthesis via salvage pathway; UMP from uracil: step 1/1. Allosterically activated by GTP. In terms of biological role, catalyzes the conversion of uracil and 5-phospho-alpha-D-ribose 1-diphosphate (PRPP) to UMP and diphosphate. The sequence is that of Uracil phosphoribosyltransferase from Pyrobaculum islandicum (strain DSM 4184 / JCM 9189 / GEO3).